The sequence spans 184 residues: Acireductone dioxygenase (184 aa).

4 residues coordinate Fe(2+): H97, H99, E103, and H141. Ni(2+) contacts are provided by H97, H99, E103, and H141.

Belongs to the acireductone dioxygenase (ARD) family. As to quaternary structure, monomer. It depends on Fe(2+) as a cofactor. Ni(2+) is required as a cofactor.

It catalyses the reaction 1,2-dihydroxy-5-(methylsulfanyl)pent-1-en-3-one + O2 = 3-(methylsulfanyl)propanoate + CO + formate + 2 H(+). The enzyme catalyses 1,2-dihydroxy-5-(methylsulfanyl)pent-1-en-3-one + O2 = 4-methylsulfanyl-2-oxobutanoate + formate + 2 H(+). It participates in amino-acid biosynthesis; L-methionine biosynthesis via salvage pathway; L-methionine from S-methyl-5-thio-alpha-D-ribose 1-phosphate: step 5/6. In terms of biological role, catalyzes 2 different reactions between oxygen and the acireductone 1,2-dihydroxy-3-keto-5-methylthiopentene (DHK-MTPene) depending upon the metal bound in the active site. Fe-containing acireductone dioxygenase (Fe-ARD) produces formate and 2-keto-4-methylthiobutyrate (KMTB), the alpha-ketoacid precursor of methionine in the methionine recycle pathway. Ni-containing acireductone dioxygenase (Ni-ARD) produces methylthiopropionate, carbon monoxide and formate, and does not lie on the methionine recycle pathway. This Parvibaculum lavamentivorans (strain DS-1 / DSM 13023 / NCIMB 13966) protein is Acireductone dioxygenase.